Here is a 156-residue protein sequence, read N- to C-terminus: Small ribosomal subunit protein uS7 (156 aa).

This sequence belongs to the universal ribosomal protein uS7 family. As to quaternary structure, part of the 30S ribosomal subunit. Contacts proteins S9 and S11.

One of the primary rRNA binding proteins, it binds directly to 16S rRNA where it nucleates assembly of the head domain of the 30S subunit. Is located at the subunit interface close to the decoding center, probably blocks exit of the E-site tRNA. This Mycobacterium leprae (strain Br4923) protein is Small ribosomal subunit protein uS7.